The sequence spans 250 residues: Isoprenyl transferase (250 aa).

Aspartate 27 is a catalytic residue. Aspartate 27 is a Mg(2+) binding site. Substrate is bound by residues 28 to 31 (GNRR), tryptophan 32, histidine 48, and 76 to 78 (STE). Asparagine 79 serves as the catalytic Proton acceptor. Substrate contacts are provided by residues phenylalanine 80, arginine 82, arginine 199, and 205 to 207 (RVS). A Mg(2+)-binding site is contributed by glutamate 218.

The protein belongs to the UPP synthase family. Homodimer. It depends on Mg(2+) as a cofactor.

In terms of biological role, catalyzes the condensation of isopentenyl diphosphate (IPP) with allylic pyrophosphates generating different type of terpenoids. This is Isoprenyl transferase from Chlamydia pneumoniae (Chlamydophila pneumoniae).